Reading from the N-terminus, the 393-residue chain is NAD(P)H-quinone oxidoreductase subunit H, chloroplastic (393 aa).

The protein belongs to the complex I 49 kDa subunit family. NDH is composed of at least 16 different subunits, 5 of which are encoded in the nucleus.

It is found in the plastid. It localises to the chloroplast thylakoid membrane. It catalyses the reaction a plastoquinone + NADH + (n+1) H(+)(in) = a plastoquinol + NAD(+) + n H(+)(out). The enzyme catalyses a plastoquinone + NADPH + (n+1) H(+)(in) = a plastoquinol + NADP(+) + n H(+)(out). In terms of biological role, NDH shuttles electrons from NAD(P)H:plastoquinone, via FMN and iron-sulfur (Fe-S) centers, to quinones in the photosynthetic chain and possibly in a chloroplast respiratory chain. The immediate electron acceptor for the enzyme in this species is believed to be plastoquinone. Couples the redox reaction to proton translocation, and thus conserves the redox energy in a proton gradient. The sequence is that of NAD(P)H-quinone oxidoreductase subunit H, chloroplastic from Carica papaya (Papaya).